The chain runs to 444 residues: Methylenetetrahydrofolate--tRNA-(uracil-5-)-methyltransferase TrmFO (444 aa).

Position 9–14 (9–14) interacts with FAD; that stretch reads GAGMAG.

It belongs to the MnmG family. TrmFO subfamily. The cofactor is FAD.

It is found in the cytoplasm. It catalyses the reaction uridine(54) in tRNA + (6R)-5,10-methylene-5,6,7,8-tetrahydrofolate + NADH + H(+) = 5-methyluridine(54) in tRNA + (6S)-5,6,7,8-tetrahydrofolate + NAD(+). The enzyme catalyses uridine(54) in tRNA + (6R)-5,10-methylene-5,6,7,8-tetrahydrofolate + NADPH + H(+) = 5-methyluridine(54) in tRNA + (6S)-5,6,7,8-tetrahydrofolate + NADP(+). Its function is as follows. Catalyzes the folate-dependent formation of 5-methyl-uridine at position 54 (M-5-U54) in all tRNAs. This Cereibacter sphaeroides (strain KD131 / KCTC 12085) (Rhodobacter sphaeroides) protein is Methylenetetrahydrofolate--tRNA-(uracil-5-)-methyltransferase TrmFO.